The primary structure comprises 489 residues: Membrane-bound lytic murein transglycosylase F (489 aa).

The signal sequence occupies residues 1–32; that stretch reads MFALTAYRLRCAAWLLATGIFLLLAGCSEAKA. The segment at 33-268 is non-LT domain; the sequence is PTALERVQKE…RLKDRYYGHV (236 aa). Residues 269–489 are LT domain; the sequence is DVLGYVGAYT…PEEDSGDEKL (221 aa). Residue glutamate 315 is part of the active site. A disordered region spans residues 466–489; it reads AESGLHLPGVNKTRPEEDSGDEKL. Over residues 478-489 the composition is skewed to basic and acidic residues; sequence TRPEEDSGDEKL.

The protein in the N-terminal section; belongs to the bacterial solute-binding protein 3 family. It in the C-terminal section; belongs to the transglycosylase Slt family.

Its subcellular location is the cell outer membrane. The enzyme catalyses Exolytic cleavage of the (1-&gt;4)-beta-glycosidic linkage between N-acetylmuramic acid (MurNAc) and N-acetylglucosamine (GlcNAc) residues in peptidoglycan, from either the reducing or the non-reducing ends of the peptidoglycan chains, with concomitant formation of a 1,6-anhydrobond in the MurNAc residue.. Murein-degrading enzyme that degrades murein glycan strands and insoluble, high-molecular weight murein sacculi, with the concomitant formation of a 1,6-anhydromuramoyl product. Lytic transglycosylases (LTs) play an integral role in the metabolism of the peptidoglycan (PG) sacculus. Their lytic action creates space within the PG sacculus to allow for its expansion as well as for the insertion of various structures such as secretion systems and flagella. The chain is Membrane-bound lytic murein transglycosylase F from Pseudomonas aeruginosa (strain UCBPP-PA14).